The following is a 169-amino-acid chain: Crossover junction endodeoxyribonuclease RuvC (169 aa).

Residues Asp11, Glu71, and Asp143 contribute to the active site. Residues Asp11, Glu71, and Asp143 each coordinate Mg(2+).

This sequence belongs to the RuvC family. As to quaternary structure, homodimer which binds Holliday junction (HJ) DNA. The HJ becomes 2-fold symmetrical on binding to RuvC with unstacked arms; it has a different conformation from HJ DNA in complex with RuvA. In the full resolvosome a probable DNA-RuvA(4)-RuvB(12)-RuvC(2) complex forms which resolves the HJ. It depends on Mg(2+) as a cofactor.

The protein localises to the cytoplasm. The enzyme catalyses Endonucleolytic cleavage at a junction such as a reciprocal single-stranded crossover between two homologous DNA duplexes (Holliday junction).. Its function is as follows. The RuvA-RuvB-RuvC complex processes Holliday junction (HJ) DNA during genetic recombination and DNA repair. Endonuclease that resolves HJ intermediates. Cleaves cruciform DNA by making single-stranded nicks across the HJ at symmetrical positions within the homologous arms, yielding a 5'-phosphate and a 3'-hydroxyl group; requires a central core of homology in the junction. The consensus cleavage sequence is 5'-(A/T)TT(C/G)-3'. Cleavage occurs on the 3'-side of the TT dinucleotide at the point of strand exchange. HJ branch migration catalyzed by RuvA-RuvB allows RuvC to scan DNA until it finds its consensus sequence, where it cleaves and resolves the cruciform DNA. The chain is Crossover junction endodeoxyribonuclease RuvC from Bartonella henselae (strain ATCC 49882 / DSM 28221 / CCUG 30454 / Houston 1) (Rochalimaea henselae).